A 379-amino-acid polypeptide reads, in one-letter code: Chaperone protein DnaJ (379 aa).

A J domain is found at 7 to 72 (CYYETLEVER…DKRAAYDRYG (66 aa)). The CR-type zinc-finger motif lies at 135–213 (GKTAQIEIPV…CTGSGRVTKE (79 aa)). Positions 148, 151, 165, 168, 187, 190, 201, and 204 each coordinate Zn(2+). CXXCXGXG motif repeat units follow at residues 148 to 155 (CESCSGTG), 165 to 172 (CSTCGGAG), 187 to 194 (CPSCQGRG), and 201 to 208 (CPSCTGSG).

Belongs to the DnaJ family. Homodimer. The cofactor is Zn(2+).

It is found in the cytoplasm. In terms of biological role, participates actively in the response to hyperosmotic and heat shock by preventing the aggregation of stress-denatured proteins and by disaggregating proteins, also in an autonomous, DnaK-independent fashion. Unfolded proteins bind initially to DnaJ; upon interaction with the DnaJ-bound protein, DnaK hydrolyzes its bound ATP, resulting in the formation of a stable complex. GrpE releases ADP from DnaK; ATP binding to DnaK triggers the release of the substrate protein, thus completing the reaction cycle. Several rounds of ATP-dependent interactions between DnaJ, DnaK and GrpE are required for fully efficient folding. Also involved, together with DnaK and GrpE, in the DNA replication of plasmids through activation of initiation proteins. The chain is Chaperone protein DnaJ from Rhodopseudomonas palustris (strain HaA2).